The chain runs to 782 residues: Cysteine-rich protein 2-binding protein (782 aa).

Serine 4 is modified (phosphoserine). The interval 13-33 (RHDDEATRTSTSEGLEEGEVE) is disordered. Lysine 231 bears the N6-acetyllysine mark. A disordered region spans residues 251–282 (PVESAMELKEKRSRTQEAKDIRRAQKEAAGFL). The span at 256–276 (MELKEKRSRTQEAKDIRRAQK) shows a compositional bias: basic and acidic residues. At serine 285 the chain carries Phosphoserine. Position 292 is an N6-acetyllysine (lysine 292). The span at 315 to 335 (LSSSDRTPLTSPSPSPSLDFS) shows a compositional bias: low complexity. 2 disordered regions span residues 315 to 346 (LSSSDRTPLTSPSPSPSLDFSAPGTPASHSAT) and 400 to 460 (VRKK…EPRY). Composition is skewed to basic and acidic residues over residues 405–426 (RGPEQIKQEVESEEEKPDRMDI) and 446–459 (KPQLEKDTKPKEPR). Serine 416 is subject to Phosphoserine. Residues 638–782 (LDYCYVRPNH…KHAFFLRLRR (145 aa)) form the N-acetyltransferase domain.

As to quaternary structure, interacts with the LIM 1 domain of CSRP2. Component of the ADA2A-containing complex (ATAC), composed of CSRP2BP, KAT2A, TADA2L, TADA3L, ZZ3, MBIP, WDR5, YEATS2, CCDC101 and DR1. In the complex, it probably interacts directly with KAT2A, MBIP and WDR5. In terms of tissue distribution, expressed in skeletal muscle, heart, lung, placenta, brain, liver, pancreas and kidney. High expression in skeletal muscle and heart. Lower expression in lung.

The protein resides in the nucleus. It localises to the cytoplasm. Component of the ATAC complex, a complex with histone acetyltransferase activity on histones H3 and H4. May function as a scaffold for the ATAC complex to promote ATAC complex stability. Has also weak histone acetyltransferase activity toward histone H4. Required for the normal progression through G1 and G2/M phases of the cell cycle. This chain is Cysteine-rich protein 2-binding protein, found in Homo sapiens (Human).